A 227-amino-acid chain; its full sequence is D-lyxose/D-mannose isomerase (227 aa).

D-fructose is bound by residues Lys-90, 103-110 (HFHWRKRE), His-171, Glu-186, and Asp-193. Mn(2+) contacts are provided by His-103, His-105, Glu-110, and His-171.

Belongs to the D-lyxose ketol-isomerase family. Homodimer; disulfide-linked. Dimerization is facilitated through a disulfide bond between the two monomers of the dimeric enzyme. It depends on Mn(2+) as a cofactor.

It catalyses the reaction D-lyxose = D-xylulose. The catalysed reaction is D-mannose = D-fructose. In terms of biological role, sugar isomerase that catalyzes the reversible isomerization of D-lyxose to D-xylulose, and D-mannose to D-fructose. Shows similar activity toward D-lyxose and D-mannose with a turnover and catalytic efficiency for D-lyxose as a substrate only 1.1- and 1.3-fold higher than those for D-mannose, respectively. Shows weaker activity with L-gulose, D-talose, L-ribose and L-allose. Overexpression enables cell growth on the rare pentose D-lyxose as the sole carbon source. This Escherichia coli O157:H7 protein is D-lyxose/D-mannose isomerase.